The sequence spans 573 residues: Sulfite reductase [NADPH] hemoprotein beta-component (573 aa).

Cys438, Cys444, Cys483, and Cys487 together coordinate [4Fe-4S] cluster. Cys487 lines the siroheme pocket.

The protein belongs to the nitrite and sulfite reductase 4Fe-4S domain family. Alpha(8)-beta(8). The alpha component is a flavoprotein, the beta component is a hemoprotein. Requires siroheme as cofactor. The cofactor is [4Fe-4S] cluster.

It carries out the reaction hydrogen sulfide + 3 NADP(+) + 3 H2O = sulfite + 3 NADPH + 4 H(+). Its pathway is sulfur metabolism; hydrogen sulfide biosynthesis; hydrogen sulfide from sulfite (NADPH route): step 1/1. Component of the sulfite reductase complex that catalyzes the 6-electron reduction of sulfite to sulfide. This is one of several activities required for the biosynthesis of L-cysteine from sulfate. This Nitrosomonas europaea (strain ATCC 19718 / CIP 103999 / KCTC 2705 / NBRC 14298) protein is Sulfite reductase [NADPH] hemoprotein beta-component.